The chain runs to 404 residues: Cysteine desulfurase IscS (404 aa).

Pyridoxal 5'-phosphate contacts are provided by residues 75 to 76 (AT), Asn-155, Gln-183, and 203 to 205 (SGH). Position 206 is an N6-(pyridoxal phosphate)lysine (Lys-206). Thr-243 provides a ligand contact to pyridoxal 5'-phosphate. Residue Cys-328 is the Cysteine persulfide intermediate of the active site. Cys-328 contacts [2Fe-2S] cluster.

This sequence belongs to the class-V pyridoxal-phosphate-dependent aminotransferase family. NifS/IscS subfamily. As to quaternary structure, homodimer. Forms a heterotetramer with IscU, interacts with other sulfur acceptors. Pyridoxal 5'-phosphate serves as cofactor.

Its subcellular location is the cytoplasm. It carries out the reaction (sulfur carrier)-H + L-cysteine = (sulfur carrier)-SH + L-alanine. It functions in the pathway cofactor biosynthesis; iron-sulfur cluster biosynthesis. Master enzyme that delivers sulfur to a number of partners involved in Fe-S cluster assembly, tRNA modification or cofactor biosynthesis. Catalyzes the removal of elemental sulfur atoms from cysteine to produce alanine. Functions as a sulfur delivery protein for Fe-S cluster synthesis onto IscU, an Fe-S scaffold assembly protein, as well as other S acceptor proteins. This is Cysteine desulfurase IscS from Shewanella sp. (strain ANA-3).